The primary structure comprises 326 residues: tRNA-modifying protein YgfZ (326 aa).

Folate is bound by residues tryptophan 27 and tryptophan 189.

This sequence belongs to the tRNA-modifying YgfZ family.

The protein resides in the cytoplasm. In terms of biological role, folate-binding protein involved in regulating the level of ATP-DnaA and in the modification of some tRNAs. It is probably a key factor in regulatory networks that act via tRNA modification, such as initiation of chromosomal replication. The protein is tRNA-modifying protein YgfZ of Escherichia coli O139:H28 (strain E24377A / ETEC).